A 377-amino-acid polypeptide reads, in one-letter code: Leukocyte elastase inhibitor (377 aa).

At Met1 the chain carries N-acetylmethionine.

It belongs to the serpin family. Ov-serpin subfamily.

It is found in the cytoplasm. Functionally, regulates the activity of the neutrophil proteases. This Xenopus laevis (African clawed frog) protein is Leukocyte elastase inhibitor (serpinb1).